The sequence spans 926 residues: MDRSGFGGMSSPVIRDAEVTRTARKHSAHKRVLIQANQEDNFGTATPRSQIIPRTPSSFRQPFVTPSSRSLLRHPDISYILGTEGRSPRHTQSSGYLGNLSMVTNLDDSNWAAAFSSQRLGLYTNTEHHSMTEDVNLSTVMLREDDPGEAASMSMFSDFLHSFLKHSSTTVFDLVEEYENICGSQVNILSKIVSRATPGLQKFSKTASMLWLLQQEMVTWRLLASLYRDRIQSSLEEENMFAIAGINASEKMVVETLFQRDSLVRQSQLVVDWLESIAKDEIGEFSDNIEFYAKSVYWENTLHSLKQRQLLSHMGSTRPLVTELDPDAPIRQKLPLDDLDREDEVRLLKYLFTLIRAGMTEEAQRLCKRCGQAWRAATLEGWKLYHDPNVNGGTELEPVEGNPYRRIWKISCWRMAEDELFNKYERAIYAALSGNLKQLLPVCDTWEDTVWAYFRVMVDSLVEQEIRTSVMTQDDSEELPREYMEANWTLEKVFEELQATDKKRVLEENQEHYHIVQKFLILGDVDGLMDEFSKWLSKSGSSLPGHLLRFMTHLILFLRTLGLQTKEEVSIEVLKTYIQLLISEKHTSLIAFYTCHLPQDLAVAQYALFLEGVTEFEQRHQCLELAKEADLDVATITKTVVENICKKDNGEFSHHDLAPSLDTGTTEEDRLKIDVIDWLVFDPAQRAEALRQGNAIMRKFLALKKHEAAKEVFVKIPQDSIAEIYNQWEEQGMESPLPAEDDNAIREHLCIRAYLEAHETFNEWFKHMNSAPQKPTLLSQATFTEKVAYEHREKKYEMDHNIWKGHLDALTADVKEKMYNVLLFVDGGWMVDVREDAEDDPERTHQMVLLRKLCLPMLCFLLHTILHSTGQYQECLQLADMVSSERHKLYLVFSKEELRKLLQKLRESSLMLLDQGLDPLGYEIQS.

N-acetylmethionine is present on Met-1. A phosphoserine mark is found at Ser-4, Ser-10, and Ser-11. Phosphothreonine occurs at positions 46 and 55. Phosphoserine occurs at positions 57 and 58. Arg-60 carries the asymmetric dimethylarginine; alternate modification. Arg-60 is subject to Omega-N-methylarginine; alternate. Thr-65 is modified (phosphothreonine). Arg-69 is subject to Omega-N-methylarginine. Ser-70 and Ser-87 each carry phosphoserine.

Belongs to the nucleoporin Nup84/Nup107 family. Part of the nuclear pore complex (NPC). Forms part of the Nup160 subcomplex in the nuclear pore which is composed of NUP160, NUP133, NUP107 and Nup96; this complex plays a role in RNA export and in tethering Nup98 and NUP153 to the nucleus. Does not interact with TPR. Interacts with ZNF106.

The protein localises to the nucleus membrane. It is found in the nucleus. Its subcellular location is the nuclear pore complex. The protein resides in the chromosome. It localises to the centromere. The protein localises to the kinetochore. In terms of biological role, plays a role in the nuclear pore complex (NPC) assembly and/or maintenance. Required for the assembly of peripheral proteins into the NPC. May anchor NUP62 to the NPC. Involved in nephrogenesis. The polypeptide is Nuclear pore complex protein Nup107 (Nup107) (Mus musculus (Mouse)).